The sequence spans 829 residues: Probable methyltransferase PMT26 (829 aa).

At 1-17 (MAQPRYTRIDNRRPSSN) the chain is on the cytoplasmic side. The helical; Signal-anchor for type II membrane protein transmembrane segment at 18 to 38 (YCSTVTVVVFVALCLVGIWMM) threads the bilayer. The Lumenal segment spans residues 39 to 829 (TSSSVGPAQN…EVETLTYAIG (791 aa)). The disordered stretch occupies residues 55–258 (DNKDGIKKQM…TSGDLSPPGA (204 aa)). Basic and acidic residues-rich tracts occupy residues 85–143 (NEDK…DSKS), 151–160 (LDEKKDLKDN), 168–177 (TNEKQTKPET), and 187–231 (ENQK…KENT). N-linked (GlcNAc...) asparagine glycosylation is found at asparagine 215, asparagine 247, asparagine 264, and asparagine 270. Residues 241–252 (QEGQSKNETSGD) show a composition bias toward polar residues. A disordered region spans residues 271–291 (GSFSTQATESKNEKEAQKGSG). Positions 280 to 291 (SKNEKEAQKGSG) are enriched in basic and acidic residues. Residues asparagine 302, asparagine 579, asparagine 595, and asparagine 756 are each glycosylated (N-linked (GlcNAc...) asparagine).

Belongs to the methyltransferase superfamily.

It localises to the golgi apparatus membrane. The chain is Probable methyltransferase PMT26 from Arabidopsis thaliana (Mouse-ear cress).